The sequence spans 175 residues: Isopentenyl-diphosphate Delta-isomerase (175 aa).

His-23 and His-30 together coordinate Mn(2+). The region spanning 28-162 (TLHLAFCVFV…PLRYTPWFRR (135 aa)) is the Nudix hydrolase domain. The active site involves Cys-65. His-67 contacts Mn(2+). Glu-85 lines the Mg(2+) pocket. Residues Glu-111 and Glu-113 each coordinate Mn(2+). Residue Glu-113 is part of the active site.

It belongs to the IPP isomerase type 1 family. It depends on Mg(2+) as a cofactor. Mn(2+) serves as cofactor.

Its subcellular location is the cytoplasm. The catalysed reaction is isopentenyl diphosphate = dimethylallyl diphosphate. The protein operates within isoprenoid biosynthesis; dimethylallyl diphosphate biosynthesis; dimethylallyl diphosphate from isopentenyl diphosphate: step 1/1. Functionally, catalyzes the 1,3-allylic rearrangement of the homoallylic substrate isopentenyl (IPP) to its highly electrophilic allylic isomer, dimethylallyl diphosphate (DMAPP). The chain is Isopentenyl-diphosphate Delta-isomerase from Halorhodospira halophila (strain DSM 244 / SL1) (Ectothiorhodospira halophila (strain DSM 244 / SL1)).